Consider the following 210-residue polypeptide: Cytochrome c oxidase subunit 2 (210 aa).

The Mitochondrial intermembrane segment spans residues 1–15 (MSFILTFWMIFLMDS). A helical membrane pass occupies residues 16–36 (IIVLISFSIFLSVWICALIIA). At 37-63 (TVLTVTKINNIYCTWDFISSKFIDTYW) the chain is on the mitochondrial matrix side. A helical transmembrane segment spans residues 64–84 (FVLGMMFILCLLLRLCLLLYF). The Mitochondrial intermembrane segment spans residues 85-210 (SCINFVSFDL…GFMPIVINFI (126 aa)). The Cu cation site is built by His157, Cys192, Glu194, Cys196, His200, and Met203. Mg(2+) is bound at residue Glu194.

The protein belongs to the cytochrome c oxidase subunit 2 family. Component of the cytochrome c oxidase (complex IV, CIV), a multisubunit enzyme composed of a catalytic core of 3 subunits and several supernumerary subunits. The complex exists as a monomer or a dimer and forms supercomplexes (SCs) in the inner mitochondrial membrane with ubiquinol-cytochrome c oxidoreductase (cytochrome b-c1 complex, complex III, CIII). The cofactor is Cu cation.

The protein resides in the mitochondrion inner membrane. It carries out the reaction 4 Fe(II)-[cytochrome c] + O2 + 8 H(+)(in) = 4 Fe(III)-[cytochrome c] + 2 H2O + 4 H(+)(out). Its function is as follows. Component of the cytochrome c oxidase, the last enzyme in the mitochondrial electron transport chain which drives oxidative phosphorylation. The respiratory chain contains 3 multisubunit complexes succinate dehydrogenase (complex II, CII), ubiquinol-cytochrome c oxidoreductase (cytochrome b-c1 complex, complex III, CIII) and cytochrome c oxidase (complex IV, CIV), that cooperate to transfer electrons derived from NADH and succinate to molecular oxygen, creating an electrochemical gradient over the inner membrane that drives transmembrane transport and the ATP synthase. Cytochrome c oxidase is the component of the respiratory chain that catalyzes the reduction of oxygen to water. Electrons originating from reduced cytochrome c in the intermembrane space (IMS) are transferred via the dinuclear copper A center (CU(A)) of subunit 2 and heme A of subunit 1 to the active site in subunit 1, a binuclear center (BNC) formed by heme A3 and copper B (CU(B)). The BNC reduces molecular oxygen to 2 water molecules using 4 electrons from cytochrome c in the IMS and 4 protons from the mitochondrial matrix. The polypeptide is Cytochrome c oxidase subunit 2 (COXII) (Trypanosoma brucei brucei).